Reading from the N-terminus, the 259-residue chain is Thiazole synthase (259 aa).

Lys95 functions as the Schiff-base intermediate with DXP in the catalytic mechanism. 1-deoxy-D-xylulose 5-phosphate is bound by residues Gly156, 183-184 (AG), and 205-206 (NS).

This sequence belongs to the ThiG family. In terms of assembly, homotetramer. Forms heterodimers with either ThiH or ThiS.

It is found in the cytoplasm. The catalysed reaction is [ThiS sulfur-carrier protein]-C-terminal-Gly-aminoethanethioate + 2-iminoacetate + 1-deoxy-D-xylulose 5-phosphate = [ThiS sulfur-carrier protein]-C-terminal Gly-Gly + 2-[(2R,5Z)-2-carboxy-4-methylthiazol-5(2H)-ylidene]ethyl phosphate + 2 H2O + H(+). Its pathway is cofactor biosynthesis; thiamine diphosphate biosynthesis. Functionally, catalyzes the rearrangement of 1-deoxy-D-xylulose 5-phosphate (DXP) to produce the thiazole phosphate moiety of thiamine. Sulfur is provided by the thiocarboxylate moiety of the carrier protein ThiS. In vitro, sulfur can be provided by H(2)S. The sequence is that of Thiazole synthase from Coxiella burnetii (strain RSA 331 / Henzerling II).